Reading from the N-terminus, the 351-residue chain is Ca(2+)/H(+) antiporter ChaA (351 aa).

Helical transmembrane passes span 4 to 24, 25 to 45, 59 to 79, 86 to 106, 130 to 150, 156 to 176, 205 to 225, 241 to 261, 282 to 302, 303 to 323, and 331 to 351; these read IFFILVAAGVPLSVIGSLMHW, PSAVLFAVYCVTIIALASYMG, IGGLLNATFGNAVELIISLFA, GIVLASLTGSVLGNLLLVAGL, GLLIFAIIVAFVIPEVFSVGM, LNLSIGISIIMILLYVAALYF, VATIVLFAATIVVAYISENLV, FIGVIIVAIVGNAAEHASAII, IAMFVAPVLVICSIFFPTSMP, LVFTLPELVAMVSAVLLMIAI, and WFEGATLLAAYVIMAIGFFLL.

It belongs to the Ca(2+):cation antiporter (CaCA) (TC 2.A.19) family. Cation/proton exchanger (CAX) subfamily. In terms of assembly, homotrimer.

It localises to the cell membrane. Calcium efflux is tightly regulated by intracellular pH. Ca(+)/H(+) antiporter that extrudes calcium in exchange for external protons. Does not transport sodium or potassium. The sequence is that of Ca(2+)/H(+) antiporter ChaA (chaA) from Bacillus subtilis (strain 168).